The primary structure comprises 471 residues: Trigger factor (471 aa).

The PPIase FKBP-type domain occupies 169 to 254; the sequence is EDRVTIDYLG…VKEVAKPNEL (86 aa). A disordered region spans residues 435–471; it reads VSKEELTAEDEDAASEAKPAKKAAAKKKAEEGKSEEA. The segment covering 461-471 has biased composition (basic and acidic residues); the sequence is KKAEEGKSEEA.

This sequence belongs to the FKBP-type PPIase family. Tig subfamily.

Its subcellular location is the cytoplasm. The enzyme catalyses [protein]-peptidylproline (omega=180) = [protein]-peptidylproline (omega=0). Involved in protein export. Acts as a chaperone by maintaining the newly synthesized protein in an open conformation. Functions as a peptidyl-prolyl cis-trans isomerase. The protein is Trigger factor of Brucella abortus (strain S19).